Here is a 256-residue protein sequence, read N- to C-terminus: Triosephosphate isomerase (256 aa).

10–12 contacts substrate; sequence NWK. The Electrophile role is filled by histidine 96. The Proton acceptor role is filled by glutamate 168. 2 residues coordinate substrate: glycine 174 and serine 213.

It belongs to the triosephosphate isomerase family. As to quaternary structure, homodimer.

It localises to the cytoplasm. The enzyme catalyses D-glyceraldehyde 3-phosphate = dihydroxyacetone phosphate. The protein operates within carbohydrate biosynthesis; gluconeogenesis. Its pathway is carbohydrate degradation; glycolysis; D-glyceraldehyde 3-phosphate from glycerone phosphate: step 1/1. In terms of biological role, involved in the gluconeogenesis. Catalyzes stereospecifically the conversion of dihydroxyacetone phosphate (DHAP) to D-glyceraldehyde-3-phosphate (G3P). The chain is Triosephosphate isomerase from Wigglesworthia glossinidia brevipalpis.